Consider the following 298-residue polypeptide: UDP-N-acetylenolpyruvoylglucosamine reductase (298 aa).

In terms of domain architecture, FAD-binding PCMH-type spans 27-206 (VGGPAQRLYR…QQQIRRLLRQ (180 aa)). Arg171 is an active-site residue. The active-site Proton donor is the Ser220. Glu290 is an active-site residue.

This sequence belongs to the MurB family. FAD is required as a cofactor.

It localises to the cytoplasm. It carries out the reaction UDP-N-acetyl-alpha-D-muramate + NADP(+) = UDP-N-acetyl-3-O-(1-carboxyvinyl)-alpha-D-glucosamine + NADPH + H(+). It participates in cell wall biogenesis; peptidoglycan biosynthesis. In terms of biological role, cell wall formation. This Nitrosococcus oceani (strain ATCC 19707 / BCRC 17464 / JCM 30415 / NCIMB 11848 / C-107) protein is UDP-N-acetylenolpyruvoylglucosamine reductase.